The primary structure comprises 132 residues: D-ribose pyranase (132 aa).

Catalysis depends on His-20, which acts as the Proton donor. Residues Asp-28, His-98, and 121–123 contribute to the substrate site; that span reads YSN.

Belongs to the RbsD / FucU family. RbsD subfamily. Homodecamer.

The protein resides in the cytoplasm. It carries out the reaction beta-D-ribopyranose = beta-D-ribofuranose. It participates in carbohydrate metabolism; D-ribose degradation; D-ribose 5-phosphate from beta-D-ribopyranose: step 1/2. In terms of biological role, catalyzes the interconversion of beta-pyran and beta-furan forms of D-ribose. The protein is D-ribose pyranase of Kosmotoga olearia (strain ATCC BAA-1733 / DSM 21960 / TBF 19.5.1).